Consider the following 64-residue polypeptide: Large ribosomal subunit protein bL35 (64 aa).

A compositionally biased stretch (basic residues) spans 1 to 26 (MPKMKSHRGASKRFKRTASGKLKRGR). Disordered regions lie at residues 1-28 (MPKM…GRAY) and 33-52 (FGNK…MVSS).

This sequence belongs to the bacterial ribosomal protein bL35 family.

The chain is Large ribosomal subunit protein bL35 from Exiguobacterium sibiricum (strain DSM 17290 / CCUG 55495 / CIP 109462 / JCM 13490 / 255-15).